Consider the following 120-residue polypeptide: uncharacterized protein (120 aa).

This is an uncharacterized protein from Mycoplasma pneumoniae (strain ATCC 29342 / M129 / Subtype 1) (Mycoplasmoides pneumoniae).